The following is a 289-amino-acid chain: tRNA pseudouridine synthase B (289 aa).

Aspartate 38 functions as the Nucleophile in the catalytic mechanism.

It belongs to the pseudouridine synthase TruB family. Type 1 subfamily.

It carries out the reaction uridine(55) in tRNA = pseudouridine(55) in tRNA. Responsible for synthesis of pseudouridine from uracil-55 in the psi GC loop of transfer RNAs. This Clostridium tetani (strain Massachusetts / E88) protein is tRNA pseudouridine synthase B.